The following is a 449-amino-acid chain: Nucleoprotein (449 aa).

The interval 1–55 (MSFTPGKQSSSRASSGNRSGNGILKWADQSDQSRNVQTRGRRVQSKQTATSQQPS) is disordered. Positions 9 to 22 (SSSRASSGNRSGNG) are enriched in low complexity. Polar residues-rich tracts occupy residues 29 to 38 (QSDQSRNVQT) and 45 to 55 (SKQTATSQQPS). Positions 52 to 194 (QQPSGGTVVP…GYYIEGSGRS (143 aa)) are RNA-binding. Residues 61–190 (PYYSWFSGIT…VLPQGYYIEG (130 aa)) form the CoV N NTD domain. Arg-106, Arg-122, and Arg-164 together coordinate RNA. Disordered regions lie at residues 158-231 (PADI…VTPD), 266-297 (ILNKPRQKRSPNKQCTVQQCFGKRGPNQNFGG), and 387-449 (MMNI…TSEI). A Phosphoserine; by host modification is found at Ser-167. Thr-174 carries the post-translational modification Phosphothreonine; by host. Ser-191 carries the phosphoserine; by host modification. 2 stretches are compositionally biased toward polar residues: residues 194–204 (SAPNSRSTSRA) and 212–227 (GSRSRANSGNRTSTPG). The CoV N CTD domain maps to 259–384 (AKEVRQKILN…QNLNAYQHQE (126 aa)). Basic residues predominate over residues 266 to 276 (ILNKPRQKRSP). Positions 266–385 (ILNKPRQKRS…NLNAYQHQED (120 aa)) are dimerization. Phosphoserine; by host is present on Ser-391. Residues 400–410 (QKNGQVENDNV) show a composition bias toward polar residues. Basic and acidic residues predominate over residues 423–440 (KSRELTAEDISLLKKMDE). The residue at position 424 (Ser-424) is a Phosphoserine; by host. Thr-428 carries the post-translational modification Phosphothreonine; by host.

It belongs to the betacoronavirus nucleocapsid protein family. As to quaternary structure, homooligomer. Both monomeric and oligomeric forms interact with RNA. Interacts with protein M. Interacts with NSP3; this interaction serves to tether the genome to the newly translated replicase-transcriptase complex at a very early stage of infection. Post-translationally, ADP-ribosylated. The ADP-ribosylation is retained in the virion during infection. In terms of processing, phosphorylated on serine and threonine residues.

It localises to the virion. The protein localises to the host endoplasmic reticulum-Golgi intermediate compartment. Its subcellular location is the host Golgi apparatus. Its function is as follows. Packages the positive strand viral genome RNA into a helical ribonucleocapsid (RNP) and plays a fundamental role during virion assembly through its interactions with the viral genome and membrane protein M. Plays an important role in enhancing the efficiency of subgenomic viral RNA transcription as well as viral replication. The protein is Nucleoprotein of Sus scrofa (Pig).